Consider the following 726-residue polypeptide: Catalase-peroxidase (726 aa).

The tryptophyl-tyrosyl-methioninium (Trp-Tyr) (with M-242) cross-link spans 93-216 (WHSAGTYRVH…LAAVQMGLIY (124 aa)). The active-site Proton acceptor is the H94. A cross-link (tryptophyl-tyrosyl-methioninium (Tyr-Met) (with W-93)) is located at residues 216–242 (YVNPEGPNGNPDPVAAAVDIRETFTRM). H257 is a binding site for heme b. The segment at 471–490 (GSDKRGGANGARIRLSPQKD) is disordered.

It belongs to the peroxidase family. Peroxidase/catalase subfamily. As to quaternary structure, homodimer or homotetramer. The cofactor is heme b. Post-translationally, formation of the three residue Trp-Tyr-Met cross-link is important for the catalase, but not the peroxidase activity of the enzyme.

It catalyses the reaction H2O2 + AH2 = A + 2 H2O. The catalysed reaction is 2 H2O2 = O2 + 2 H2O. Functionally, bifunctional enzyme with both catalase and broad-spectrum peroxidase activity. This chain is Catalase-peroxidase, found in Methylacidiphilum infernorum (isolate V4) (Methylokorus infernorum (strain V4)).